The primary structure comprises 198 residues: A-type ATP synthase subunit E (198 aa).

This sequence belongs to the V-ATPase E subunit family. In terms of assembly, has multiple subunits with at least A(3), B(3), C, D, E, F, H, I and proteolipid K(x).

The protein localises to the cell membrane. In terms of biological role, component of the A-type ATP synthase that produces ATP from ADP in the presence of a proton gradient across the membrane. The polypeptide is A-type ATP synthase subunit E (Pyrococcus horikoshii (strain ATCC 700860 / DSM 12428 / JCM 9974 / NBRC 100139 / OT-3)).